The sequence spans 514 residues: Xylose import ATP-binding protein XylG (514 aa).

ABC transporter domains follow at residues 7–246 and 263–508; these read FEMR…VGRE and LEAR…IHAE. An ATP-binding site is contributed by 39–46; the sequence is GENGAGKS.

The protein belongs to the ABC transporter superfamily. Xylose importer (TC 3.A.1.2.4) family. As to quaternary structure, the complex is composed of two ATP-binding proteins (XylG), two transmembrane proteins (XylH) and a solute-binding protein (XylF).

The protein localises to the cell inner membrane. The enzyme catalyses D-xylose(out) + ATP + H2O = D-xylose(in) + ADP + phosphate + H(+). Its function is as follows. Part of the ABC transporter complex XylFGH involved in xylose import. Responsible for energy coupling to the transport system. The sequence is that of Xylose import ATP-binding protein XylG from Ralstonia nicotianae (strain ATCC BAA-1114 / GMI1000) (Ralstonia solanacearum).